The primary structure comprises 101 residues: Replication restart protein PriB (101 aa).

The SSB domain maps to 1–101 (MTTNNLVLAG…LHAENVELKT (101 aa)).

It belongs to the PriB family. Homodimer. Interacts with PriA and DnaT. Component of the replication restart primosome. Primosome assembly occurs via a 'hand-off' mechanism. PriA binds to replication forks, subsequently PriB then DnaT bind; DnaT then displaces ssDNA to generate the helicase loading substrate.

Its function is as follows. Involved in the restart of stalled replication forks, which reloads the replicative helicase on sites other than the origin of replication; the PriA-PriB pathway is the major replication restart pathway. During primosome assembly it facilitates complex formation between PriA and DnaT on DNA; stabilizes PriA on DNA. Stimulates the DNA unwinding activity of PriA helicase. The protein is Replication restart protein PriB of Shewanella piezotolerans (strain WP3 / JCM 13877).